The sequence spans 222 residues: Putative N-acetylmannosamine-6-phosphate 2-epimerase (222 aa).

It belongs to the NanE family.

The catalysed reaction is an N-acyl-D-glucosamine 6-phosphate = an N-acyl-D-mannosamine 6-phosphate. The protein operates within amino-sugar metabolism; N-acetylneuraminate degradation; D-fructose 6-phosphate from N-acetylneuraminate: step 3/5. Functionally, converts N-acetylmannosamine-6-phosphate (ManNAc-6-P) to N-acetylglucosamine-6-phosphate (GlcNAc-6-P). This is Putative N-acetylmannosamine-6-phosphate 2-epimerase from Staphylococcus aureus (strain Mu3 / ATCC 700698).